The following is a 343-amino-acid chain: UDP-3-O-acylglucosamine N-acyltransferase (343 aa).

The Proton acceptor role is filled by histidine 248.

It belongs to the transferase hexapeptide repeat family. LpxD subfamily. Homotrimer.

The enzyme catalyses a UDP-3-O-[(3R)-3-hydroxyacyl]-alpha-D-glucosamine + a (3R)-hydroxyacyl-[ACP] = a UDP-2-N,3-O-bis[(3R)-3-hydroxyacyl]-alpha-D-glucosamine + holo-[ACP] + H(+). It participates in bacterial outer membrane biogenesis; LPS lipid A biosynthesis. Catalyzes the N-acylation of UDP-3-O-acylglucosamine using 3-hydroxyacyl-ACP as the acyl donor. Is involved in the biosynthesis of lipid A, a phosphorylated glycolipid that anchors the lipopolysaccharide to the outer membrane of the cell. This chain is UDP-3-O-acylglucosamine N-acyltransferase, found in Microcystis aeruginosa (strain NIES-843 / IAM M-2473).